A 359-amino-acid polypeptide reads, in one-letter code: Nicotinate-nucleotide--dimethylbenzimidazole phosphoribosyltransferase (359 aa).

The active-site Proton acceptor is the glutamate 318.

The protein belongs to the CobT family. As to quaternary structure, homodimer.

The catalysed reaction is 5,6-dimethylbenzimidazole + nicotinate beta-D-ribonucleotide = alpha-ribazole 5'-phosphate + nicotinate + H(+). Its pathway is nucleoside biosynthesis; alpha-ribazole biosynthesis; alpha-ribazole from 5,6-dimethylbenzimidazole: step 1/2. In terms of biological role, catalyzes the synthesis of alpha-ribazole-5'-phosphate from nicotinate mononucleotide (NAMN) and 5,6-dimethylbenzimidazole (DMB). The polypeptide is Nicotinate-nucleotide--dimethylbenzimidazole phosphoribosyltransferase (Escherichia coli (strain SMS-3-5 / SECEC)).